A 94-amino-acid polypeptide reads, in one-letter code: MMDLFKFFSKDNGTSKKVAKERLKLVLVHDRTNCSPRFLEMLKEDIIKVISDYVEIDEVGLEIKLTTTKRDFDEQSVPALVANIPIKKMKERSR.

The protein belongs to the MinE family.

Functionally, prevents the cell division inhibition by proteins MinC and MinD at internal division sites while permitting inhibition at polar sites. This ensures cell division at the proper site by restricting the formation of a division septum at the midpoint of the long axis of the cell. This chain is Cell division topological specificity factor, found in Alkaliphilus metalliredigens (strain QYMF).